The following is a 118-amino-acid chain: Large ribosomal subunit protein bL20 (118 aa).

The protein belongs to the bacterial ribosomal protein bL20 family.

Functionally, binds directly to 23S ribosomal RNA and is necessary for the in vitro assembly process of the 50S ribosomal subunit. It is not involved in the protein synthesizing functions of that subunit. In Tolumonas auensis (strain DSM 9187 / NBRC 110442 / TA 4), this protein is Large ribosomal subunit protein bL20.